The following is a 285-amino-acid chain: 2-dehydro-3-deoxyphosphooctonate aldolase (285 aa).

It belongs to the KdsA family.

It localises to the cytoplasm. The catalysed reaction is D-arabinose 5-phosphate + phosphoenolpyruvate + H2O = 3-deoxy-alpha-D-manno-2-octulosonate-8-phosphate + phosphate. It participates in carbohydrate biosynthesis; 3-deoxy-D-manno-octulosonate biosynthesis; 3-deoxy-D-manno-octulosonate from D-ribulose 5-phosphate: step 2/3. It functions in the pathway bacterial outer membrane biogenesis; lipopolysaccharide biosynthesis. The sequence is that of 2-dehydro-3-deoxyphosphooctonate aldolase from Methylibium petroleiphilum (strain ATCC BAA-1232 / LMG 22953 / PM1).